Here is a 345-residue protein sequence, read N- to C-terminus: NADPH dehydrogenase (345 aa).

An FMN-binding site is contributed by 23-26; the sequence is SPMC. Residue Tyr-28 participates in substrate binding. Positions 60 and 102 each coordinate FMN. 164–167 is a substrate binding site; it reads HGAH. Residues Arg-215 and 307 to 308 contribute to the FMN site; that span reads GR.

Belongs to the NADH:flavin oxidoreductase/NADH oxidase family. NamA subfamily. As to quaternary structure, homotetramer. FMN serves as cofactor.

It catalyses the reaction A + NADPH + H(+) = AH2 + NADP(+). Catalyzes the reduction of the double bond of an array of alpha,beta-unsaturated aldehydes and ketones. It also reduces the nitro group of nitroester and nitroaromatic compounds. It could have a role in detoxification processes. This chain is NADPH dehydrogenase, found in Bacillus cereus (strain B4264).